Consider the following 317-residue polypeptide: Methionyl-tRNA formyltransferase (317 aa).

A (6S)-5,6,7,8-tetrahydrofolate-binding site is contributed by 112–115; sequence SLLP.

This sequence belongs to the Fmt family.

It carries out the reaction L-methionyl-tRNA(fMet) + (6R)-10-formyltetrahydrofolate = N-formyl-L-methionyl-tRNA(fMet) + (6S)-5,6,7,8-tetrahydrofolate + H(+). Functionally, attaches a formyl group to the free amino group of methionyl-tRNA(fMet). The formyl group appears to play a dual role in the initiator identity of N-formylmethionyl-tRNA by promoting its recognition by IF2 and preventing the misappropriation of this tRNA by the elongation apparatus. The chain is Methionyl-tRNA formyltransferase from Histophilus somni (strain 2336) (Haemophilus somnus).